The following is a 221-amino-acid chain: MMKCLFFLCLCLFPILVFSSTFTSQNPINLPSESPVPKPVLDTNGKKLNPNSSYRIISTFWGALGGDVYLGKSPNSDAPCPDGVFRYNSDVGPSGTPVRFIPLSTNIFEDQLLNIQFNIPTVKLCVSYTIWKVGNLNTHLWTMLLETGGTIGKADSSYFKIVKSSKFGYNLLYCPITRPPIVCPFCRDDDFCAKVGVVIQNGKRRLALVNENPLDVLFQEV.

The N-terminal stretch at 1–23 (MMKCLFFLCLCLFPILVFSSTFT) is a signal peptide. Positions 24-32 (SQNPINLPS) are excised as a propeptide. Residues 26 to 31 (NPINLP) carry the Vacuolar targeting signal motif. An N-linked (GlcNAc...) asparagine glycan is attached at N51. Intrachain disulfides connect C80–C125 and C174–C186.

The protein belongs to the protease inhibitor I3 (leguminous Kunitz-type inhibitor) family. As to expression, tubers, young leaves and flower bud. Not detected in root, stem or mature leaves.

The protein resides in the vacuole. Functionally, inhibitor of cathepsin D (aspartic protease). May also inhibit trypsin and chymotrypsin (serine proteases). Protects the plant by inhibiting proteases of invading organisms. The protein is Aspartic protease inhibitor 1 of Solanum tuberosum (Potato).